We begin with the raw amino-acid sequence, 426 residues long: Histidine--tRNA ligase (426 aa).

The protein belongs to the class-II aminoacyl-tRNA synthetase family.

It localises to the cytoplasm. It catalyses the reaction tRNA(His) + L-histidine + ATP = L-histidyl-tRNA(His) + AMP + diphosphate + H(+). This chain is Histidine--tRNA ligase (hisS), found in Thermoplasma volcanium (strain ATCC 51530 / DSM 4299 / JCM 9571 / NBRC 15438 / GSS1).